The chain runs to 369 residues: UPF0284 protein cce_1085 (369 aa).

Belongs to the UPF0284 family.

In Crocosphaera subtropica (strain ATCC 51142 / BH68) (Cyanothece sp. (strain ATCC 51142)), this protein is UPF0284 protein cce_1085.